Here is a 318-residue protein sequence, read N- to C-terminus: Protein phosphatase 1 regulatory subunit 3C (318 aa).

The PP1-binding motif signature appears at 84–87 (RVVF). The segment at 141-263 (PSADYLSFRN…YRIVHVQWKP (123 aa)) is interaction with EPM2A. Positions 149-257 (RNHFQKNSVC…NNEGQNYRIV (109 aa)) constitute a CBM21 domain.

As to quaternary structure, interacts with PPP1CC catalytic subunit of PP1 and associates with glycogen. Forms complexes with glycogen phosphorylase, glycogen synthase and phosphorylase kinase which is necessary for its regulation of PP1 activity. Also interacts with EPM2A/laforin. In terms of processing, ubiquitinated by NHLRC1/malin in a EPM2A/laforin-dependent manner.

Functionally, acts as a glycogen-targeting subunit for PP1 and regulates its activity. Activates glycogen synthase, reduces glycogen phosphorylase activity and limits glycogen breakdown. Dramatically increases basal and insulin-stimulated glycogen synthesis upon overexpression in a variety of cell types. This Bos taurus (Bovine) protein is Protein phosphatase 1 regulatory subunit 3C.